The chain runs to 417 residues: Hydroxysqualene dehydroxylase (417 aa).

Belongs to the HpnE family.

The catalysed reaction is squalene + FAD + H2O + H(+) = hydroxysqualene + FADH2. Its pathway is secondary metabolite biosynthesis; hopanoid biosynthesis. Its function is as follows. Involved in the biosynthesis of the hopanoid precursor squalene (SQ) from farnesyl diphosphate (FPP). Catalyzes the third (last) step, the reduction of hydroxysqualene (HSQ) to SQ. This Sinorhizobium fredii (strain NBRC 101917 / NGR234) protein is Hydroxysqualene dehydroxylase.